Reading from the N-terminus, the 217-residue chain is Adenylate kinase (217 aa).

10-15 (GAGKGT) serves as a coordination point for ATP. Residues 30 to 59 (STGDMLRAAVKAESELGLQVKEVMASGGLV) are NMP. AMP is bound by residues Thr-31, Arg-36, 57–59 (GLV), 85–88 (GFPR), and Gln-92. The segment at 122-159 (GRRVHEGSGRIYHVKYDPPKVEGKDDETGEALIQREDD) is LID. Residues Arg-123 and 132 to 133 (IY) contribute to the ATP site. AMP-binding residues include Arg-156 and Arg-167. Residue Gly-203 coordinates ATP.

This sequence belongs to the adenylate kinase family. Monomer.

It localises to the cytoplasm. The enzyme catalyses AMP + ATP = 2 ADP. The protein operates within purine metabolism; AMP biosynthesis via salvage pathway; AMP from ADP: step 1/1. In terms of biological role, catalyzes the reversible transfer of the terminal phosphate group between ATP and AMP. Plays an important role in cellular energy homeostasis and in adenine nucleotide metabolism. The sequence is that of Adenylate kinase from Marinobacter nauticus (strain ATCC 700491 / DSM 11845 / VT8) (Marinobacter aquaeolei).